We begin with the raw amino-acid sequence, 153 residues long: UPF0260 protein YcgN (153 aa).

Belongs to the UPF0260 family.

In Salmonella typhi, this protein is UPF0260 protein YcgN.